A 352-amino-acid polypeptide reads, in one-letter code: Guanine nucleotide-binding protein alpha-7 subunit (352 aa).

The N-myristoyl glycine moiety is linked to residue glycine 2. Cysteine 4 carries the S-palmitoyl cysteine lipid modification. A G-alpha domain is found at 32-352 (RIIKLLLLGA…AKNLKSMGLC (321 aa)). A G1 motif region spans residues 35–48 (KLLLLGAGESGKST). Residues 40-47 (GAGESGKS), 174-180 (LRTRIKT), 199-203 (DVGGQ), 268-271 (NKKD), and alanine 324 contribute to the GTP site. Residues serine 47 and threonine 180 each coordinate Mg(2+). Residues 172–180 (DLLRTRIKT) are G2 motif. Positions 195–204 (FRVIDVGGQR) are G3 motif. Positions 264–271 (ILFLNKKD) are G4 motif. The interval 322–327 (TCATDT) is G5 motif.

This sequence belongs to the G-alpha family. G(i/o/t/z) subfamily. In terms of assembly, g proteins are composed of 3 units; alpha, beta and gamma. The alpha chain contains the guanine nucleotide binding site.

Functionally, guanine nucleotide-binding proteins (G proteins) are involved as modulators or transducers in various transmembrane signaling systems. This is Guanine nucleotide-binding protein alpha-7 subunit (gpa-7) from Caenorhabditis elegans.